A 156-amino-acid polypeptide reads, in one-letter code: Ribosomal RNA large subunit methyltransferase H (156 aa).

S-adenosyl-L-methionine is bound by residues leucine 73, glycine 104, and 123–128; that span reads ISSMTL.

The protein belongs to the RNA methyltransferase RlmH family. As to quaternary structure, homodimer.

The protein resides in the cytoplasm. The enzyme catalyses pseudouridine(1915) in 23S rRNA + S-adenosyl-L-methionine = N(3)-methylpseudouridine(1915) in 23S rRNA + S-adenosyl-L-homocysteine + H(+). Functionally, specifically methylates the pseudouridine at position 1915 (m3Psi1915) in 23S rRNA. This is Ribosomal RNA large subunit methyltransferase H from Burkholderia multivorans (strain ATCC 17616 / 249).